A 307-amino-acid polypeptide reads, in one-letter code: Protein phosphatase PTC7 homolog fig (307 aa).

One can recognise a PPM-type phosphatase domain in the interval 41–300 (VQGSSKDQQL…DDITVILASV (260 aa)). The Mn(2+) site is built by Asp-77, Gly-78, and Asp-222.

It belongs to the PP2C family. Mg(2+) is required as a cofactor. Mn(2+) serves as cofactor.

The enzyme catalyses O-phospho-L-seryl-[protein] + H2O = L-seryl-[protein] + phosphate. The catalysed reaction is O-phospho-L-threonyl-[protein] + H2O = L-threonyl-[protein] + phosphate. The polypeptide is Protein phosphatase PTC7 homolog fig (Drosophila grimshawi (Hawaiian fruit fly)).